An 853-amino-acid chain; its full sequence is Neural cell adhesion molecule 1 (853 aa).

Positions 1 to 19 are cleaved as a signal peptide; sequence MLQTKNLIWTLFFLGTAVS. 5 Ig-like C2-type domains span residues 20-111, 116-205, 212-300, 307-412, and 415-500; these read LQVD…ATVN, QKLM…KDIQ, PTVQ…ASIH, PKIT…LEVQ, and PKLQ…ESLE. Residues 20-719 are Extracellular-facing; sequence LQVDIVPSQG…NGSPTSGLST (700 aa). Disulfide bonds link Cys41-Cys96 and Cys139-Cys189. Heparin contacts are provided by residues 152 to 156 and 161 to 165; these read KHKGR and KKDVR. The N-linked (GlcNAc...) asparagine glycan is linked to Asn222. Cys235 and Cys286 are disulfide-bonded. Asn314, Asn346, Asn432, Asn458, and Asn487 each carry an N-linked (GlcNAc...) asparagine glycan. Cys328 and Cys394 form a disulfide bridge. A disulfide bridge connects residues Cys435 and Cys488. 2 Fibronectin type-III domains span residues 508 to 607 and 609 to 704; these read TPSS…TQPV and EPSA…SAQP. Residues 720-737 form a helical membrane-spanning segment; that stretch reads GAIVGILVVTFVLLLVAV. Residues 738-853 are Cytoplasmic-facing; the sequence is DVTCYFLNKC…TQIKVNESKA (116 aa). The disordered stretch occupies residues 764-853; sequence GAKGKDMEEG…TQIKVNESKA (90 aa). 2 stretches are compositionally biased toward basic and acidic residues: residues 766 to 807 and 815 to 829; these read KGKD…HTEP and EPEK…ETET. A phosphoserine mark is found at Ser778 and Ser782. The segment covering 838 to 853 has biased composition (polar residues); sequence TVPNDATQIKVNESKA.

In terms of assembly, interacts with MDK. Found in a complex with SLC39A6, SLC39A10 and with NCAM1; this complex controls NCAM1 phosphorylation and integration into focal adhesion complexes during epithelial-tomesenchymal transition. Interacts with synaptic plasticity regulator PANTS. In terms of processing, polysialylated by ST8SIA2 and ST8SIA4. Polysialylation modulates cell interactions by confering both attractive and repulsive properties that are highly regulated by ST8SIA2 and ST8SIA4. Polysialylation is formed on a-2,3-linked sialic acid of core glycans.

It is found in the cell membrane. Functionally, this protein is a cell adhesion molecule involved in neuron-neuron adhesion, neurite fasciculation, outgrowth of neurites, etc. The protein is Neural cell adhesion molecule 1 of Bos taurus (Bovine).